We begin with the raw amino-acid sequence, 37 residues long: Large ribosomal subunit protein bL36 (37 aa).

It belongs to the bacterial ribosomal protein bL36 family.

In Staphylococcus epidermidis (strain ATCC 35984 / DSM 28319 / BCRC 17069 / CCUG 31568 / BM 3577 / RP62A), this protein is Large ribosomal subunit protein bL36.